The chain runs to 310 residues: Homoserine kinase (310 aa).

ATP is bound at residue 91–101 (PIGSGLGSSAC).

The protein belongs to the GHMP kinase family. Homoserine kinase subfamily.

The protein resides in the cytoplasm. It carries out the reaction L-homoserine + ATP = O-phospho-L-homoserine + ADP + H(+). Its pathway is amino-acid biosynthesis; L-threonine biosynthesis; L-threonine from L-aspartate: step 4/5. Catalyzes the ATP-dependent phosphorylation of L-homoserine to L-homoserine phosphate. The chain is Homoserine kinase from Escherichia coli O6:K15:H31 (strain 536 / UPEC).